Consider the following 576-residue polypeptide: Putative ankyrin repeat protein L86 (576 aa).

ANK repeat units lie at residues 68–101 (HGWT…DPNI), 118–147 (TRIN…NVNF), 159–188 (SGGF…NPNI), 192–223 (KGNT…DLNS), 227–260 (KRKT…NPNI), 264–300 (KGNT…NPNI), 304–337 (SGIS…DPNI), 341–373 (QGLT…DPNI), 377–408 (KGKN…NPNA), 412–446 (KGRT…SLTD), and 448–480 (NGKK…TFDV).

In Acanthamoeba polyphaga mimivirus (APMV), this protein is Putative ankyrin repeat protein L86.